The following is a 293-amino-acid chain: Cell wall protein PGA31 (293 aa).

The N-terminal stretch at 1 to 18 (MKFLTAASLLTLSSSALA) is a signal peptide. A glycan (N-linked (GlcNAc...) asparagine) is linked at Asn131. Positions 161–187 (ESASSSSSSAAPEPTASSSEAPKETPV) are disordered. The span at 163-180 (ASSSSSSAAPEPTASSSE) shows a compositional bias: low complexity. Asn190 is a glycosylation site (N-linked (GlcNAc...) asparagine). A disordered region spans residues 233–262 (VPSKTASSEAAPPKTTVDSVSKPAPSGKKP). The GPI-anchor amidated glycine moiety is linked to residue Gly271. A propeptide spans 272–293 (AANALTGGSVAIAVAAAIGLVF) (removed in mature form).

Belongs to the SRP1/TIP1 family. The GPI-anchor is attached to the protein in the endoplasmic reticulum and serves to target the protein to the cell surface. There, the glucosamine-inositol phospholipid moiety is cleaved off and the GPI-modified mannoprotein is covalently attached via its lipidless GPI glycan remnant to the 1,6-beta-glucan of the outer cell wall layer.

It is found in the secreted. Its subcellular location is the cell wall. It localises to the membrane. Functionally, component of the cell wall involved in virulence which plays a role in the relationship between C.albicans and the host. Involved in the regulation or assembly of chitin within the cell wall. The chain is Cell wall protein PGA31 (PGA31) from Candida albicans (strain SC5314 / ATCC MYA-2876) (Yeast).